A 557-amino-acid chain; its full sequence is Kelch repeat and BTB domain-containing protein 2 (557 aa).

One can recognise a BTB domain in the interval 26-95 (CDVIITIRDG…LYNRHISSMN (70 aa)). Residues 143–223 (IVKYIKRMLM…CIDIQNLDKK (81 aa)) form the BACK domain. Kelch repeat units lie at residues 305–352 (EIII…VIDD), 353–399 (TIYA…VLDQ), and 415–464 (SVHA…SHED).

In terms of assembly, interacts (via BTB domain) with host CUL3.

The protein resides in the host cytoplasm. Its function is as follows. Probable substrate-specific adapter of CUL3-containing E3 ubiquitin-protein ligases which mediate the ubiquitination and subsequent proteasomal degradation of host target proteins. This is Kelch repeat and BTB domain-containing protein 2 (KBTB2) from Cowpox virus (strain Brighton Red) (CPV).